The sequence spans 300 residues: Acetaldehyde dehydrogenase 1 (300 aa).

11 to 14 is an NAD(+) binding site; the sequence is SGNI. The Acyl-thioester intermediate role is filled by C126. Residues 157–165 and N276 contribute to the NAD(+) site; that span reads SAGPGTRAN.

The protein belongs to the acetaldehyde dehydrogenase family.

The catalysed reaction is acetaldehyde + NAD(+) + CoA = acetyl-CoA + NADH + H(+). This is Acetaldehyde dehydrogenase 1 from Rhodococcus erythropolis (strain PR4 / NBRC 100887).